We begin with the raw amino-acid sequence, 436 residues long: Histone acetyltransferase RTT109 (436 aa).

One can recognise a Rtt109-type HAT domain in the interval 2 to 404 (SLNDFLSSVL…LQSLTGKREH (403 aa)). Residues 88-90 (ADT) and 97-101 (RVSVR) contribute to the acetyl-CoA site. An interaction with VPS75 region spans residues 128–170 (RSYKKISPELISAASTPARTLRILARRLKQSGSTVLKEIESPR). Acetyl-CoA contacts are provided by residues Phe-192, Ala-196, 211-213 (HIL), and Trp-221. Asp-288 acts as the Proton donor/acceptor in catalysis. An N6-acetyllysine; by autocatalysis modification is found at Lys-290. The interaction with ASF1 stretch occupies residues 419–433 (LAITMLKPRKKAKAL).

The protein belongs to the RTT109 family. In terms of assembly, forms a complex composed of two RTT109 subunits and one VPS75 homodimer; each RTT109 subunit interacts predominantly with VPS75 instead of interacting with the other RTT109 subunit. Interacts with VPS75; the interaction is direct. Interacts (via C-terminus) with ASF1; the interaction is direct. Interacts with histone H3/H4 heterodimers via histone H3.

The protein resides in the nucleus. It catalyses the reaction L-lysyl-[histone] + acetyl-CoA = N(6)-acetyl-L-lysyl-[histone] + CoA + H(+). The enzyme catalyses L-lysyl-[protein] + acetyl-CoA = N(6)-acetyl-L-lysyl-[protein] + CoA + H(+). In terms of biological role, histone chaperone-dependent acetylase that modifies 'Lys-9', 'Lys-14', 'Lys-23', 'Lys-27', and 'Lys-56' on histone H3 (H3K9Ac, H3K14Ac and H3K23Ac, H3K27Ac, and H3K56Ac) to promote nucleosome assembly, genomic stability, DNA repair and transcriptional regulation during mitotic S-phase. Its residue selectivity is influenced by the acetylation status of histone H3, and also the presence of histone chaperone ASF1 that shifts selectivity to 'Lys-56' when H3K14Ac is already present. H3K56 acetylation weakens the interaction between the histone core and the surrounding DNA in the nucleosomal particle and drives chromatin disassembly. Autoacetylates. Independently of acetyltransferase activity, stimulates histone deposition by VPS75. Involved in regulation of Ty1 transposition. This is Histone acetyltransferase RTT109 from Saccharomyces cerevisiae (strain ATCC 204508 / S288c) (Baker's yeast).